A 408-amino-acid chain; its full sequence is uncharacterized protein (408 aa).

2 disordered regions span residues 184-206 (DENN…SILF) and 254-317 (NNKT…SSDS). Residues 187–206 (NNNSNNNNNNNSNNNSSILF) are compositionally biased toward low complexity.

This is an uncharacterized protein from Dictyostelium discoideum (Social amoeba).